The chain runs to 259 residues: Deoxyribose-phosphate aldolase (259 aa).

Catalysis depends on D102, which acts as the Proton donor/acceptor. K167 acts as the Schiff-base intermediate with acetaldehyde in catalysis. Residue K201 is the Proton donor/acceptor of the active site.

This sequence belongs to the DeoC/FbaB aldolase family. DeoC type 2 subfamily.

Its subcellular location is the cytoplasm. It catalyses the reaction 2-deoxy-D-ribose 5-phosphate = D-glyceraldehyde 3-phosphate + acetaldehyde. It functions in the pathway carbohydrate degradation; 2-deoxy-D-ribose 1-phosphate degradation; D-glyceraldehyde 3-phosphate and acetaldehyde from 2-deoxy-alpha-D-ribose 1-phosphate: step 2/2. Catalyzes a reversible aldol reaction between acetaldehyde and D-glyceraldehyde 3-phosphate to generate 2-deoxy-D-ribose 5-phosphate. This chain is Deoxyribose-phosphate aldolase, found in Edwardsiella ictaluri (strain 93-146).